A 172-amino-acid polypeptide reads, in one-letter code: Ribosome maturation factor RimM (172 aa).

Residues 96–168 (DGEFYYHEII…RVDVELLEGL (73 aa)) enclose the PRC barrel domain.

The protein belongs to the RimM family. Binds ribosomal protein uS19.

It is found in the cytoplasm. In terms of biological role, an accessory protein needed during the final step in the assembly of 30S ribosomal subunit, possibly for assembly of the head region. Essential for efficient processing of 16S rRNA. May be needed both before and after RbfA during the maturation of 16S rRNA. It has affinity for free ribosomal 30S subunits but not for 70S ribosomes. The polypeptide is Ribosome maturation factor RimM (Streptococcus suis (strain 05ZYH33)).